A 953-amino-acid polypeptide reads, in one-letter code: MDYKKTLNLPDTSFPMRGDLAKREPGWVQQWEENRVYQAIRAASKGRPLFILHDGPPYANGDIHIGHAVNKILKDIIVKSRSMAGYDAPYVPGWDCHGMPIEIQVEKKFGKNLPVTEVHAKARAYALEQLDRQRQDFKRLGVLGDWDNPYLTMNFSNEADEIRVLARILEKGYVFRGLKPVNWCFDCGSALAEAEVEYADRVDPAIDVAFPFTDKAALAGAFGLDSVDDGAIVIWTTTPWTIPSNQALNVHPEIEYALVRVSPTPVHGPLVLIAKERVEACLKTWGLEGEIIATAPGQALDGLRFAHPLARAAEGYDRTSPIYLGDYVTLDTGTGVVHSAPAYGIEDFVSCKNHGLADADILSPVMGDGKYIATLPLFGGLSIWDANPKIVEALKLAGSLMHVQKLSHSYMHCWRHKSPVIYRATSQWFAGMDVTPEGGGQTLRESALAGIEATTFYPAWGRARLQAMIANRPDWTLSRQRQWGVPMAFFVHKETGALHPRTVELLEEVAKRVEKSGIEAWQSLDPRELLGDEADSYEKNRDTLDVWFDSGSTHATVLGGKDHALHGSHGEQLAWPADLYLEGSDQHRGWFHSSLLTGCMLYGQPPYKGLLTHGFVVDGQGRKMSKSVGNVIAPQKVSDSLGAEILRLWVASTDYSGELSISDEILKRVVEGYRRIRNTLRFLLANVADFDGVNQAVPYGDLLEIDRYALVMTAQMQAEVQAHYQSYDFHPAVSRLQTFCSEDLGAFYLDILKDRLYTNAPGSHARRSAQTALLDITQTLVKLMAPILSFTAEEAWKVLADSALKHQADAARLTIFTEVYHTLPPYADADALAGRWGRLRAIRADVLRKLEDVRGEGLIGSSLQAEVDIYADGEDLALLSALGDDLRFVLIVSRATVHARAGELAIEIAPSAHKKCERCWHWRADVGQDADHPEICGRCVSNLFGAGESRAKA.

Positions P57 to H67 match the 'HIGH' region motif. E582 provides a ligand contact to L-isoleucyl-5'-AMP. The 'KMSKS' region signature appears at K623–S627. Position 626 (K626) interacts with ATP. Residues C916, C919, C936, and C939 each coordinate Zn(2+).

The protein belongs to the class-I aminoacyl-tRNA synthetase family. IleS type 1 subfamily. As to quaternary structure, monomer. The cofactor is Zn(2+).

It localises to the cytoplasm. It carries out the reaction tRNA(Ile) + L-isoleucine + ATP = L-isoleucyl-tRNA(Ile) + AMP + diphosphate. Functionally, catalyzes the attachment of isoleucine to tRNA(Ile). As IleRS can inadvertently accommodate and process structurally similar amino acids such as valine, to avoid such errors it has two additional distinct tRNA(Ile)-dependent editing activities. One activity is designated as 'pretransfer' editing and involves the hydrolysis of activated Val-AMP. The other activity is designated 'posttransfer' editing and involves deacylation of mischarged Val-tRNA(Ile). In Bordetella avium (strain 197N), this protein is Isoleucine--tRNA ligase.